Here is a 132-residue protein sequence, read N- to C-terminus: UPF0299 membrane protein CKO_00648 (132 aa).

4 helical membrane-spanning segments follow: residues 7-27 (IIWQ…AGIF), 31-51 (LLPI…VLLA), 63-83 (GCYV…VGVM), and 93-113 (FGPV…VVSW).

This sequence belongs to the UPF0299 family.

The protein localises to the cell inner membrane. This is UPF0299 membrane protein CKO_00648 from Citrobacter koseri (strain ATCC BAA-895 / CDC 4225-83 / SGSC4696).